A 921-amino-acid chain; its full sequence is Sodium/calcium exchanger 2 (921 aa).

A signal peptide spans 1–20 (MAPLALVGVTLLLAAPPCSG). Residues 21–68 (AATPTPSLPPPPANDSDTSTGGCQGSYRCQPGVLLPVWEPDDPSLGDK) lie on the Extracellular side of the membrane. Positions 22-42 (ATPTPSLPPPPANDSDTSTGG) are disordered. Asn34 carries an N-linked (GlcNAc...) asparagine glycan. Residues 69 to 90 (AARAVVYFVAMVYMFLGVSIIA) traverse the membrane as a helical segment. Topologically, residues 91 to 130 (DRFMAAIEVITSKEKEITITKANGETSVGTVRIWNETVSN) are cytoplasmic. Residues 131–152 (LTLMALGSSAPEILLSVIEVCG) traverse the membrane as a helical segment. The stretch at 135-175 (ALGSSAPEILLSVIEVCGHNFQAGELGPGTIVGSAAFNMFV) is one Alpha-1 repeat. Topologically, residues 153–164 (HNFQAGELGPGT) are extracellular. A helical transmembrane segment spans residues 165 to 185 (IVGSAAFNMFVVIAVCIYVIP). The Cytoplasmic portion of the chain corresponds to 186-196 (AGESRKIKHLR). A helical membrane pass occupies residues 197–219 (VFFVTASWSIFAYVWLYLILAVF). Residues 220-222 (SPG) lie on the Extracellular side of the membrane. A helical transmembrane segment spans residues 223–246 (VVQVWEALLTLVFFPVCVVFAWMA). Over 247–720 (DKRLLFYKYV…DGSREERLPS (474 aa)) the chain is Cytoplasmic. Residues 248 to 267 (KRLLFYKYVYKRYRTDPRSG) form a putative calmodulin-binding region region. 2 consecutive Calx-beta domains span residues 384–483 (GAGE…VRLL) and 512–612 (ATVT…IELG). Glu407, Asp443, Asp468, Asp469, Ile471, Glu473, Glu476, Asp518, Asp519, Asp520, Glu536, Asp598, Glu599, and Glu600 together coordinate Ca(2+). Ser622 is subject to Phosphoserine. Ca(2+) is bound at residue Glu665. Residues 721-740 (CFDYVMHFLTVFWKVLFACV) form a helical membrane-spanning segment. Residues 741-747 (PPTEYCH) are Extracellular-facing. A helical transmembrane segment spans residues 748–770 (GWACFGVSILVIGLLTALIGDLA). At 771–772 (SH) the chain is on the cytoplasmic side. The chain crosses the membrane as a helical span at residues 773 to 791 (FGCTVGLKDSVNAVVFVAL). One copy of the Alpha-2 repeat lies at 790-826 (ALGTSIPDTFASKVAALQDQCADASIGNVTGSNAVNV). Residues 792–822 (GTSIPDTFASKVAALQDQCADASIGNVTGSN) lie on the Extracellular side of the membrane. N-linked (GlcNAc...) asparagine glycosylation is present at Asn817. Residues 823–843 (AVNVFLGLGVAWSVAAVYWAV) traverse the membrane as a helical segment. At 844–854 (QGRPFEVRTGT) the chain is on the cytoplasmic side. The helical transmembrane segment at 855 to 875 (LAFSVTLFTVFAFVGIAVLLY) threads the bilayer. At 876–892 (RRRPHIGGELGGPRGPK) the chain is on the extracellular side. Residues 893 to 909 (LATTALFLGLWLLYILF) traverse the membrane as a helical segment. At 910-921 (ASLEAYCHIRGF) the chain is on the cytoplasmic side.

The protein belongs to the Ca(2+):cation antiporter (CaCA) (TC 2.A.19) family. SLC8 subfamily.

Its subcellular location is the cell membrane. It is found in the basolateral cell membrane. It localises to the perikaryon. The protein localises to the cell projection. The protein resides in the dendrite. Its subcellular location is the dendritic spine. The enzyme catalyses Ca(2+)(in) + 3 Na(+)(out) = Ca(2+)(out) + 3 Na(+)(in). Calcium transport is down-regulated by Na(+) and stimulated by Ca(2+). In terms of biological role, mediates the electrogenic exchange of Ca(2+) against Na(+) ions across the cell membrane, and thereby contributes to the regulation of cytoplasmic Ca(2+) levels and Ca(2+)-dependent cellular processes. Contributes to cellular Ca(2+) homeostasis in excitable cells. Contributes to the rapid decrease of cytoplasmic Ca(2+) levels back to baseline after neuronal activation, and thereby contributes to modulate synaptic plasticity, learning and memory. Plays a role in regulating urinary Ca(2+) and Na(+) excretion. This is Sodium/calcium exchanger 2 (SLC8A2) from Homo sapiens (Human).